Consider the following 621-residue polypeptide: Chaperone protein dnaK (621 aa).

The disordered stretch occupies residues 597 to 621 (VYSSTQQDNSKTEDGSVIDTNSKEA).

The protein belongs to the heat shock protein 70 family.

The protein resides in the plastid. The protein localises to the chloroplast. Acts as a chaperone. This Gracilaria tenuistipitata var. liui (Red alga) protein is Chaperone protein dnaK.